Here is a 307-residue protein sequence, read N- to C-terminus: Acetaldehyde dehydrogenase (307 aa).

12-15 (SGNI) serves as a coordination point for NAD(+). Residue cysteine 130 is the Acyl-thioester intermediate of the active site. NAD(+)-binding positions include 161 to 169 (SVGPGTRQN) and asparagine 272.

This sequence belongs to the acetaldehyde dehydrogenase family.

The enzyme catalyses acetaldehyde + NAD(+) + CoA = acetyl-CoA + NADH + H(+). This chain is Acetaldehyde dehydrogenase, found in Shewanella halifaxensis (strain HAW-EB4).